The sequence spans 80 residues: RNA-binding protein Hfq (80 aa).

Residues 10 to 69 (DPFLNVLRKEHIPVSIYLVNGIKLQGHIDSFDQYVVLLRNSVTQMVYKHAISTIVPGKAV) enclose the Sm domain.

The protein belongs to the Hfq family. In terms of assembly, homohexamer.

Its function is as follows. RNA chaperone that binds small regulatory RNA (sRNAs) and mRNAs to facilitate mRNA translational regulation in response to envelope stress, environmental stress and changes in metabolite concentrations. Also binds with high specificity to tRNAs. This is RNA-binding protein Hfq from Nitrosomonas eutropha (strain DSM 101675 / C91 / Nm57).